The following is a 577-amino-acid chain: Protein downstream neighbor of son homolog (577 aa).

Disordered regions lie at residues 1 to 67 (MAEL…KRRN) and 328 to 382 (FTQP…LEEM). The span at 362-375 (ETDEVSDESDEDES) shows a compositional bias: acidic residues.

The protein belongs to the DONSON family. Component of the replisome complex.

The protein resides in the nucleus. Replisome component that maintains genome stability by protecting stalled or damaged replication forks. After the induction of replication stress, required for the stabilization of stalled replication forks, the efficient activation of the intra-S-phase and G/2M cell-cycle checkpoints and the maintenance of genome stability. The protein is Protein downstream neighbor of son homolog of Xenopus tropicalis (Western clawed frog).